The primary structure comprises 417 residues: Imidazolonepropionase (417 aa).

The Fe(3+) site is built by His-80 and His-82. Positions 80 and 82 each coordinate Zn(2+). The 4-imidazolone-5-propanoate site is built by Arg-89, Tyr-152, and His-187. Residue Tyr-152 participates in N-formimidoyl-L-glutamate binding. His-252 contacts Fe(3+). His-252 provides a ligand contact to Zn(2+). Glu-255 lines the 4-imidazolone-5-propanoate pocket. A Fe(3+)-binding site is contributed by Asp-326. Zn(2+) is bound at residue Asp-326. Residues Asn-328 and Gly-330 each coordinate N-formimidoyl-L-glutamate. Residue Ser-331 participates in 4-imidazolone-5-propanoate binding.

This sequence belongs to the metallo-dependent hydrolases superfamily. HutI family. Zn(2+) serves as cofactor. It depends on Fe(3+) as a cofactor.

The protein localises to the cytoplasm. The catalysed reaction is 4-imidazolone-5-propanoate + H2O = N-formimidoyl-L-glutamate. Its pathway is amino-acid degradation; L-histidine degradation into L-glutamate; N-formimidoyl-L-glutamate from L-histidine: step 3/3. In terms of biological role, catalyzes the hydrolytic cleavage of the carbon-nitrogen bond in imidazolone-5-propanoate to yield N-formimidoyl-L-glutamate. It is the third step in the universal histidine degradation pathway. In Bacteroides thetaiotaomicron (strain ATCC 29148 / DSM 2079 / JCM 5827 / CCUG 10774 / NCTC 10582 / VPI-5482 / E50), this protein is Imidazolonepropionase.